We begin with the raw amino-acid sequence, 77 residues long: Large ribosomal subunit protein uL24c (77 aa).

Belongs to the universal ribosomal protein uL24 family. Part of the 50S ribosomal subunit.

The protein localises to the plastid. It localises to the chloroplast. Its function is as follows. One of two assembly initiator proteins, it binds directly to the 5'-end of the 23S rRNA, where it nucleates assembly of the 50S subunit. The chain is Large ribosomal subunit protein uL24c (rpl24) from Thalassiosira pseudonana (Marine diatom).